A 598-amino-acid polypeptide reads, in one-letter code: MTDSTTHDALPAWQTRDHLDDPVIGELRNRFGPEAFTVQPTRTGMPVVWVKPDQLLEVMTFLRKQPKPYVMLFDLHGVDERLRTHRDGLPAADFSVFYHLISIERNRDIMLKVALSEKDLHVPTATKVFPNANWYERETWEMFGITFDGHPHLSRIMMPQTWEGHPLRKDYPARATEFDPFVLTKQKEDLEMEALTFKPEDWGMKRGTENEDFMFLNLGPNHPSAHGAFRIILQLDGEEIVDCVPDIGYHHRGAEKMGERQSWHSYIPYTDRIEYLGGCVNEMPYVLAVEKLAGIKVPDRVDTIRVMLSELFRINSHLLYISTFIQDVGAMTPVFFAFTDRQKIYDLVEAITGFRMHPAWFRIGGVAHDLPRGWDRLLREFLEWMPKRLDSYVKAALKNSILKGRSVGVASYNAKEALEWGVTGAGLRATGIEFDVRKWRPYSGYENFDFEVPVGDGNSDCYTRVMLKVEELRQSLRILEQCLNNMPEGPFKADHPLTTPPPKERTLQHIETLITHFLQVSWGPVMPANESFQMIEATKGINSYYLTSDGSTMSYRTRVRTPSFAHLQQIPAVIRGSLVSDLIVYLGSIDFVMSDVDR.

The NADH dehydrogenase I subunit C stretch occupies residues 1–188 (MTDSTTHDAL…DPFVLTKQKE (188 aa)). The NADH dehydrogenase I subunit D stretch occupies residues 212–598 (DFMFLNLGPN…IDFVMSDVDR (387 aa)).

The protein in the N-terminal section; belongs to the complex I 30 kDa subunit family. This sequence in the C-terminal section; belongs to the complex I 49 kDa subunit family. As to quaternary structure, NDH-1 is composed of 13 different subunits. Subunits NuoB, CD, E, F, and G constitute the peripheral sector of the complex.

The protein resides in the cell inner membrane. The catalysed reaction is a quinone + NADH + 5 H(+)(in) = a quinol + NAD(+) + 4 H(+)(out). Its function is as follows. NDH-1 shuttles electrons from NADH, via FMN and iron-sulfur (Fe-S) centers, to quinones in the respiratory chain. The immediate electron acceptor for the enzyme in this species is believed to be ubiquinone. Couples the redox reaction to proton translocation (for every two electrons transferred, four hydrogen ions are translocated across the cytoplasmic membrane), and thus conserves the redox energy in a proton gradient. This chain is NADH-quinone oxidoreductase subunit C/D, found in Serratia proteamaculans (strain 568).